A 382-amino-acid chain; its full sequence is Anhydro-N-acetylmuramic acid kinase (382 aa).

An ATP-binding site is contributed by 22–29 (GTSMDGVD).

It belongs to the anhydro-N-acetylmuramic acid kinase family.

The enzyme catalyses 1,6-anhydro-N-acetyl-beta-muramate + ATP + H2O = N-acetyl-D-muramate 6-phosphate + ADP + H(+). It functions in the pathway amino-sugar metabolism; 1,6-anhydro-N-acetylmuramate degradation. Its pathway is cell wall biogenesis; peptidoglycan recycling. In terms of biological role, catalyzes the specific phosphorylation of 1,6-anhydro-N-acetylmuramic acid (anhMurNAc) with the simultaneous cleavage of the 1,6-anhydro ring, generating MurNAc-6-P. Is required for the utilization of anhMurNAc either imported from the medium or derived from its own cell wall murein, and thus plays a role in cell wall recycling. The sequence is that of Anhydro-N-acetylmuramic acid kinase from Burkholderia orbicola (strain AU 1054).